Here is a 96-residue protein sequence, read N- to C-terminus: Probable quinol oxidase subunit 4 (96 aa).

3 consecutive transmembrane segments (helical) span residues 8–28, 36–56, and 68–88; these read TVGFIASIVLTLLAVFVTLYT, VTIIFGFAFIQAALQLLMFMH, and FKVIFAIIITLVTVIGTYWVM.

The protein belongs to the cytochrome c oxidase bacterial subunit 4 family.

The protein localises to the cell membrane. It carries out the reaction 2 a quinol + O2 = 2 a quinone + 2 H2O. Functionally, catalyzes quinol oxidation with the concomitant reduction of oxygen to water. This chain is Probable quinol oxidase subunit 4 (qoxD), found in Staphylococcus epidermidis (strain ATCC 35984 / DSM 28319 / BCRC 17069 / CCUG 31568 / BM 3577 / RP62A).